Here is a 263-residue protein sequence, read N- to C-terminus: Putative 2-aminoethylphosphonate transport system permease protein PhnV (263 aa).

6 consecutive transmembrane segments (helical) span residues 13–33 (GVVA…VILM), 69–89 (LTIG…AALA), 104–124 (VFYL…LVAF), 131–151 (MNGT…AFTF), 185–205 (LPLL…LSMG), and 233–253 (NIAD…LLMM). Residues 65–253 (LLASLTIGFC…LVAITLLLMM (189 aa)) form the ABC transmembrane type-1 domain.

It belongs to the binding-protein-dependent transport system permease family.

The protein localises to the cell inner membrane. Functionally, probably part of the PhnSTUV complex (TC 3.A.1.11.5) involved in 2-aminoethylphosphonate import. Probably responsible for the translocation of the substrate across the membrane. This Salmonella typhi protein is Putative 2-aminoethylphosphonate transport system permease protein PhnV (phnV).